Consider the following 740-residue polypeptide: Copalyl diphosphate synthase 2 (740 aa).

Substrate is bound at residue lysine 154. Residues aspartate 287 and aspartate 289 each coordinate Mg(2+). Positions 287–290 (DADD) match the DXDD motif motif. A substrate-binding site is contributed by lysine 373.

This sequence belongs to the terpene synthase family. Mg(2+) is required as a cofactor.

The enzyme catalyses (2E,6E,10E)-geranylgeranyl diphosphate = (+)-copalyl diphosphate. It participates in secondary metabolite biosynthesis; terpenoid biosynthesis. Monofunctional diterpene synthase converting geranylgeranyl diphosphate to copalyl diphosphate. In Selaginella moellendorffii (Spikemoss), this protein is Copalyl diphosphate synthase 2 (CPS2).